We begin with the raw amino-acid sequence, 586 residues long: A-type ATP synthase subunit A (586 aa).

An ATP-binding site is contributed by 238-245 (GPFGSGKT).

Belongs to the ATPase alpha/beta chains family. As to quaternary structure, has multiple subunits with at least A(3), B(3), C, D, E, F, H, I and proteolipid K(x).

The protein localises to the cell membrane. The enzyme catalyses ATP + H2O + 4 H(+)(in) = ADP + phosphate + 5 H(+)(out). Functionally, component of the A-type ATP synthase that produces ATP from ADP in the presence of a proton gradient across the membrane. The A chain is the catalytic subunit. The chain is A-type ATP synthase subunit A from Haloferax volcanii (strain ATCC 29605 / DSM 3757 / JCM 8879 / NBRC 14742 / NCIMB 2012 / VKM B-1768 / DS2) (Halobacterium volcanii).